Reading from the N-terminus, the 110-residue chain is UPF0473 protein SSP1146 (110 aa).

It belongs to the UPF0473 family.

The protein is UPF0473 protein SSP1146 of Staphylococcus saprophyticus subsp. saprophyticus (strain ATCC 15305 / DSM 20229 / NCIMB 8711 / NCTC 7292 / S-41).